The primary structure comprises 180 residues: ADP ribosylation factor 4 (180 aa).

Residue glycine 2 is the site of N-myristoyl glycine attachment. Residues 24–31 (GLDAAGKT), 67–71 (DVGGQ), and 126–129 (NKQD) contribute to the GTP site.

This sequence belongs to the small GTPase superfamily. Arf family. As to expression, uniformly distributed throughout adults.

It localises to the golgi apparatus. In terms of biological role, GTP-binding protein involved in protein trafficking; may modulate vesicle budding and uncoating within the Golgi apparatus. This chain is ADP ribosylation factor 4, found in Drosophila melanogaster (Fruit fly).